Here is a 105-residue protein sequence, read N- to C-terminus: UPF0235 protein A1G_07140 (105 aa).

The protein belongs to the UPF0235 family.

The sequence is that of UPF0235 protein A1G_07140 from Rickettsia rickettsii (strain Sheila Smith).